The primary structure comprises 263 residues: Putative SNAP25 homologous protein SNAP30 (263 aa).

Disordered regions lie at residues 1-61 (MFGF…LQSQ) and 132-209 (NLGG…DGLS). Polar residues-rich tracts occupy residues 8-34 (PGNNKLPNESSNNKGGTITAGRRTSSE) and 52-61 (FNDSGGLQSQ). The segment covering 158–173 (KPSKKSENHKEEREKL) has biased composition (basic and acidic residues). A compositionally biased stretch (polar residues) spans 180-194 (RSSSQPALDQPTNAL). Over residues 197–206 (VEQEKAKQDD) the composition is skewed to basic and acidic residues. The t-SNARE coiled-coil homology domain maps to 198 to 260 (EQEKAKQDDG…QGANQRARHL (63 aa)).

This sequence belongs to the SNAP-25 family.

The protein resides in the membrane. The protein localises to the cytoplasm. Its function is as follows. Vesicle trafficking protein that functions in the secretory pathway. This Arabidopsis thaliana (Mouse-ear cress) protein is Putative SNAP25 homologous protein SNAP30 (SNAP30).